The following is an 86-amino-acid chain: Small nuclear ribonucleoprotein F (86 aa).

In terms of domain architecture, Sm spans asparagine 14 to asparagine 86.

It belongs to the snRNP Sm proteins family. SmF/LSm6 subfamily. In terms of assembly, component of the Sm core complex, present in spliceosomal snRNP U1, U2, U4/U6 and U5. The core complex contains SMB1, SMD1, SMD2, SMD3, SME1, SMX3 and SMX2 (Sm proteins B, D1, D2, D3, E, F and G, respectively), and is probably a heptameric ring structure. SMX3 specifically interacts with SME1. Belongs to the CWC complex (or CEF1-associated complex), a spliceosome sub-complex reminiscent of a late-stage spliceosome composed of the U2, U5 and U6 snRNAs and at least BUD13, BUD31, BRR2, CDC40, CEF1, CLF1, CUS1, CWC2, CWC15, CWC21, CWC22, CWC23, CWC24, CWC25, CWC27, ECM2, HSH155, IST3, ISY1, LEA1, MSL1, NTC20, PRP8, PRP9, PRP11, PRP19, PRP21, PRP22, PRP45, PRP46, SLU7, SMB1, SMD1, SMD2, SMD3, SMX2, SMX3, SNT309, SNU114, SPP2, SYF1, SYF2, RSE1 and YJU2. Component of the U4/U6-U5 tri-snRNP complex composed of the U4, U6 and U5 snRNAs and at least PRP3, PRP4, PRP6, PRP8, PRP18, PRP31, PRP38, SNU13, SNU23, SNU66, SNU114, SPP381, SMB1, SMD1, SMD2, SMD3, SMX2, SMX3, LSM2, LSM3, LSM4, LSM5, LSM6, LSM7, LSM8, BRR2 and DIB1.

It is found in the nucleus. The protein resides in the cytoplasm. Its function is as follows. Plays a role in pre-mRNA splicing as a core component of the spliceosomal U1, U2, U4 and U5 small nuclear ribonucleoproteins (snRNPs), the building blocks of the spliceosome. The sequence is that of Small nuclear ribonucleoprotein F (SMX3) from Saccharomyces cerevisiae (strain ATCC 204508 / S288c) (Baker's yeast).